Here is a 31-residue protein sequence, read N- to C-terminus: Cyclotide mech-4 (31 aa).

The segment at residues 1–31 (GSIPCGESCVYIPCISSLLGCSCKSKVCYKD) is a cross-link (cyclopeptide (Gly-Asp)). Cystine bridges form between Cys-5–Cys-21, Cys-9–Cys-23, and Cys-14–Cys-28.

This is a cyclic peptide. Post-translationally, contains 3 disulfide bonds.

In terms of biological role, probably participates in a plant defense mechanism (Potential). Binds to and induces leakage in phospholipd membranes, particularly ones containing 1-palmitoyl-2-oleophosphatidylethanolamine (POPE). This is Cyclotide mech-4 from Melicytus chathamicus (Chatham Island mahoe).